The chain runs to 116 residues: Cystatin (116 aa).

The Secondary area of contact motif lies at 53-57 (QLVSG). 2 disulfides stabilise this stretch: C71-C81 and C95-C115. At S80 the chain carries Phosphoserine.

This sequence belongs to the cystatin family.

It localises to the secreted. In terms of biological role, this protein binds tightly to and inhibits papain and cathepsin B. This chain is Cystatin, found in Coturnix japonica (Japanese quail).